The sequence spans 456 residues: ATP synthase subunit beta (456 aa).

135 to 142 contacts ATP; sequence GGAGVGKT.

It belongs to the ATPase alpha/beta chains family. As to quaternary structure, F-type ATPases have 2 components, CF(1) - the catalytic core - and CF(0) - the membrane proton channel. CF(1) has five subunits: alpha(3), beta(3), gamma(1), delta(1), epsilon(1). CF(0) has four main subunits: a(1), b(1), b'(1) and c(9-12).

The protein resides in the cellular thylakoid membrane. The enzyme catalyses ATP + H2O + 4 H(+)(in) = ADP + phosphate + 5 H(+)(out). Produces ATP from ADP in the presence of a proton gradient across the membrane. The catalytic sites are hosted primarily by the beta subunits. This is ATP synthase subunit beta (atpD) from Acaryochloris marina (strain MBIC 11017).